We begin with the raw amino-acid sequence, 669 residues long: Elongation factor G 2 (669 aa).

Positions 1–276 (MGIRNIGIMA…SIVDYLPSPF (276 aa)) constitute a tr-type G domain. GTP-binding positions include 10–17 (AHIDAGKT), 74–78 (DTPGH), and 128–131 (NKMD).

The protein belongs to the TRAFAC class translation factor GTPase superfamily. Classic translation factor GTPase family. EF-G/EF-2 subfamily.

It localises to the cytoplasm. In terms of biological role, catalyzes the GTP-dependent ribosomal translocation step during translation elongation. During this step, the ribosome changes from the pre-translocational (PRE) to the post-translocational (POST) state as the newly formed A-site-bound peptidyl-tRNA and P-site-bound deacylated tRNA move to the P and E sites, respectively. Catalyzes the coordinated movement of the two tRNA molecules, the mRNA and conformational changes in the ribosome. The polypeptide is Elongation factor G 2 (fusA2) (Borreliella afzelii (strain PKo) (Borrelia afzelii)).